The chain runs to 179 residues: Apolipophorin-3b (179 aa).

Residues 1–16 (MNTLLAVLMLAVAAQA) form the signal peptide. 12 repeats span residues 30–40 (VQQLNHTIVNA), 41–52 (AHELHETLGLPT), 53–60 (PDEALNLL), 61–78 (TEQA…TTSL), 79–89 (KQEAEKHQGSV), 90–99 (AEQLNRFARN), 100–113 (LNNS…SAQP), 114–127 (ADQL…LTNV), 128–140 (GHQW…RPSV), 141–151 (AQEAWAPVQSA), 152–165 (LQEA…AAAN), and 166–179 (LQNS…KPAN). Residue Asn-34 is glycosylated (N-linked (GlcNAc...) asparagine). Asn-101 carries N-linked (GlcNAc...) asparagine glycosylation. Residues 152–179 (LQEAAEKTKEAAANLQNSIQSAVQKPAN) are disordered. Polar residues predominate over residues 165 to 179 (NLQNSIQSAVQKPAN).

This sequence belongs to the insect apolipophorin-3 family. As to quaternary structure, equilibrium between a soluble monomer and a bound lipoprotein form. Apolipophorin-3 associates with lipophorin during lipid loading until each particle contains 14 molecules of apolipophorin-3 in L.migratoria (5 molecules of apolipophorin-3a and 9 of apolipophorin-3b). Hemolymph.

The protein localises to the secreted. Functionally, assists in the loading of diacylglycerol, generated from triacylglycerol stores in the fat body through the action of adipokinetic hormone, into lipophorin, the hemolymph lipoprotein. It increases the lipid carrying capacity of lipophorin by covering the expanding hydrophobic surface resulting from diacylglycerol uptake. It thus plays a critical role in the transport of lipids during flight in several species of insects. The sequence is that of Apolipophorin-3b from Locusta migratoria (Migratory locust).